We begin with the raw amino-acid sequence, 122 residues long: MKTLTRMQLGALGEQLAVEHLSGQGLQILTRNWRCRYGELDVIACEAATRTVVFVEVKTRTGDGYGGLAQAVTEGKVRRLRRLAGLWLAGQDRGWAAVRLDVIGVRIGRSANPEITHLMGVG.

The protein belongs to the UPF0102 family.

The chain is UPF0102 protein MUL_2060 from Mycobacterium ulcerans (strain Agy99).